The sequence spans 329 residues: Ribosomal RNA small subunit methyltransferase C (329 aa).

The protein belongs to the methyltransferase superfamily. RsmC family. In terms of assembly, monomer.

The protein localises to the cytoplasm. It carries out the reaction guanosine(1207) in 16S rRNA + S-adenosyl-L-methionine = N(2)-methylguanosine(1207) in 16S rRNA + S-adenosyl-L-homocysteine + H(+). Its function is as follows. Specifically methylates the guanine in position 1207 of 16S rRNA in the 30S particle. The protein is Ribosomal RNA small subunit methyltransferase C of Haemophilus ducreyi (strain 35000HP / ATCC 700724).